The following is a 434-amino-acid chain: Forkhead box protein A2 (434 aa).

Residues 149 to 243 constitute a DNA-binding region (fork-head); the sequence is KPPYSYISLI…ENGCYLRRQK (95 aa). Residues 249 to 262 are compositionally biased toward basic and acidic residues; that stretch reads KKPSLREGGGKKLS. The interval 249–339 is disordered; it reads KKPSLREGGG…VLSHEAQSHL (91 aa). 2 stretches are compositionally biased toward low complexity: residues 263–291 and 317–333; these read EGSS…SSSP and ASQA…VLSH.

Its subcellular location is the nucleus. Functionally, acts as a transcriptional activator during early development, limiting the extent of mesoderm formation in the gastrula. Binds to DNA via the target sequence 5'-GT[AC]AACA-3', with 5'-GTAAACA-3' being the preferred binding site. The polypeptide is Forkhead box protein A2 (Xenopus tropicalis (Western clawed frog)).